Reading from the N-terminus, the 504-residue chain is Maturase K (504 aa).

It belongs to the intron maturase 2 family. MatK subfamily.

It localises to the plastid. It is found in the chloroplast. In terms of biological role, usually encoded in the trnK tRNA gene intron. Probably assists in splicing its own and other chloroplast group II introns. This is Maturase K from Mentzelia laevicaulis (Blazing star).